The primary structure comprises 253 residues: Imidazole glycerol phosphate synthase subunit HisF (253 aa).

Catalysis depends on residues Asp-11 and Asp-130.

The protein belongs to the HisA/HisF family. In terms of assembly, heterodimer of HisH and HisF.

It is found in the cytoplasm. It catalyses the reaction 5-[(5-phospho-1-deoxy-D-ribulos-1-ylimino)methylamino]-1-(5-phospho-beta-D-ribosyl)imidazole-4-carboxamide + L-glutamine = D-erythro-1-(imidazol-4-yl)glycerol 3-phosphate + 5-amino-1-(5-phospho-beta-D-ribosyl)imidazole-4-carboxamide + L-glutamate + H(+). The protein operates within amino-acid biosynthesis; L-histidine biosynthesis; L-histidine from 5-phospho-alpha-D-ribose 1-diphosphate: step 5/9. Its function is as follows. IGPS catalyzes the conversion of PRFAR and glutamine to IGP, AICAR and glutamate. The HisF subunit catalyzes the cyclization activity that produces IGP and AICAR from PRFAR using the ammonia provided by the HisH subunit. The chain is Imidazole glycerol phosphate synthase subunit HisF from Dinoroseobacter shibae (strain DSM 16493 / NCIMB 14021 / DFL 12).